The primary structure comprises 350 residues: Hydroxymethylglutaryl-CoA synthase (350 aa).

The Proton donor/acceptor role is filled by Glu-83. The Acyl-thioester intermediate role is filled by Cys-115. The (3S)-3-hydroxy-3-methylglutaryl-CoA site is built by Cys-115 and Thr-156. Arg-204 lines the CoA pocket. (3S)-3-hydroxy-3-methylglutaryl-CoA is bound by residues Thr-206 and His-239. The Proton donor/acceptor role is filled by His-239. Position 244 (Lys-244) interacts with CoA. Positions 271 and 301 each coordinate (3S)-3-hydroxy-3-methylglutaryl-CoA.

This sequence belongs to the thiolase-like superfamily. Archaeal HMG-CoA synthase family. Interacts with acetoacetyl-CoA thiolase that catalyzes the precedent step in the pathway and with a DUF35 protein. The acetoacetyl-CoA thiolase/HMG-CoA synthase complex channels the intermediate via a fused CoA-binding site, which allows for efficient coupling of the endergonic thiolase reaction with the exergonic HMGCS reaction.

The enzyme catalyses acetoacetyl-CoA + acetyl-CoA + H2O = (3S)-3-hydroxy-3-methylglutaryl-CoA + CoA + H(+). The protein operates within metabolic intermediate biosynthesis; (R)-mevalonate biosynthesis; (R)-mevalonate from acetyl-CoA: step 2/3. In terms of biological role, catalyzes the condensation of acetyl-CoA with acetoacetyl-CoA to form 3-hydroxy-3-methylglutaryl-CoA (HMG-CoA). Functions in the mevalonate (MVA) pathway leading to isopentenyl diphosphate (IPP), a key precursor for the biosynthesis of isoprenoid compounds that are building blocks of archaeal membrane lipids. The chain is Hydroxymethylglutaryl-CoA synthase from Thermococcus onnurineus (strain NA1).